Reading from the N-terminus, the 94-residue chain is MAASKGNAAAAACALVLVLLAVGAEAQGGGGGECVPQLNRLLACRAYAVPGAGDPSAECCSALSSISQGCACSAISIMNSLPSRCHLSQINCSA.

Residues 1–26 form the signal peptide; that stretch reads MAASKGNAAAAACALVLVLLAVGAEA. Cystine bridges form between Cys34/Cys72, Cys44/Cys59, Cys60/Cys85, and Cys70/Cys92. Asn91 carries an N-linked (GlcNAc...) asparagine glycan.

The protein belongs to the plant LTP family.

Functionally, lipid-transfer protein that may be regulated by the transcription factor UDT1 in developing anthers and play a role in tapetum development. The protein is Non-specific lipid-transfer protein C4 of Oryza sativa subsp. japonica (Rice).